A 305-amino-acid polypeptide reads, in one-letter code: PI-PLC X domain-containing protein 1 (305 aa).

The N-terminal stretch at 1-24 (MSMSTLRHFLWLGALLLATIQVSA) is a signal peptide. One can recognise a PI-PLC X-box domain in the interval 25-189 (LPTAQDLICN…RLIVFVDSKA (165 aa)). Active-site residues include H53 and H97. N237 carries an N-linked (GlcNAc...) asparagine glycan.

It is found in the secreted. In Arthroderma benhamiae (strain ATCC MYA-4681 / CBS 112371) (Trichophyton mentagrophytes), this protein is PI-PLC X domain-containing protein 1.